The primary structure comprises 121 residues: uncharacterized protein (121 aa).

A helical transmembrane segment spans residues 65-84 (TILFYTPTLICFLFLQNFLY).

The protein resides in the membrane. This is an uncharacterized protein from Saccharomyces cerevisiae (strain ATCC 204508 / S288c) (Baker's yeast).